Consider the following 706-residue polypeptide: G2/M phase-specific E3 ubiquitin-protein ligase (706 aa).

Residues 11-51 form a C2HC pre-PHD-type zinc finger; it reads NLACVFCRKNDDCPNKYGEKKTKEKWNLTVHYYCLLMSSGI. The segment at 79 to 128 adopts a PHD-type 1 zinc-finger fold; the sequence is LKCCVCKKNGASIGCVAPRCKRSYHFPCGLQRECIFQFTGNFASFCWNHR. The segment at 143 to 193 adopts a PHD-type 2; degenerate zinc-finger fold; the sequence is PCTICLEFIEPIPSYNILRSPCCKNAWFHRDCLQVQAINAGVFFFRCTICS. A PHD-type 3 zinc finger spans residues 237–286; that stretch reads RCRCKEGRDYNAPDSKWEIKRCQCCGSSGTHLACSSLRSWEQNWECLECR. An HECT domain is found at 371 to 698; the sequence is IWTSALDAFR…IRNTLKLEKE (328 aa).

The protein resides in the nucleus. It localises to the nucleolus. Its subcellular location is the cytoplasm. The catalysed reaction is S-ubiquitinyl-[E2 ubiquitin-conjugating enzyme]-L-cysteine + [acceptor protein]-L-lysine = [E2 ubiquitin-conjugating enzyme]-L-cysteine + N(6)-ubiquitinyl-[acceptor protein]-L-lysine.. The protein operates within protein modification; protein ubiquitination. E3 ubiquitin-protein ligase which accepts ubiquitin from an E2 ubiquitin-conjugating enzyme in the form of a thioester and then directly transfers the ubiquitin to targeted substrates. Essential in early embryonic development to prevent apoptotic death. The polypeptide is G2/M phase-specific E3 ubiquitin-protein ligase (G2E3) (Macaca fascicularis (Crab-eating macaque)).